The chain runs to 1174 residues: MSTYFGVYIPTSKAGCFEGSVSQCIGSIAAVNIKPSNPASGSASVASGSPSGSAASVQTGNADDGSAATKYEDPDYPPDSPLWLIFTEKSKALDILRHYKEARLREFPNLEQAESYVQFGFESIEALKRFCKAKPESKPIPIISGSGYKSSPTSTDNSCSSSPTGNGSGFIIPLGSNSSMSNLLLSDSPTSSPSSSSNVIANGRQQQMQQQQQQQPQQPDVSGEGPPFRAPTKQELVEFRKQIEGGHIDRVKRIIWENPRFLISSGDTPTSLKEGCRYNAMHICAQVNKARIAQLLLKTISDREFTQLYVGKKGSGKMCAALNISLLDYYLNMPDKGRGETPLHFAAKNGHVAMVEVLVSYPECKSLRNHEGKEPKEIICLRNANATHVTIKKLELLLYDPHFVPVLRSQSNTLPPKVGQPFSPKDPPNLQHKADDYEGLSVDLAISALAGPMSREKAMNFYRRWKTPPRVSNNVMSPLAGSPFSSPVKVTPSKSIFDRSAGNSSPVHSGRRVLFSPLAEATSSPKPTKNVPNGTNECEHNNNNVKPVYPLEFPATPIRKMKPDLFMAYRNNNSFDSPSLADDSQILDMSLSRSLNASLNDSFRERHIKNTDIEKGLEVVGRQLARQEQLEWREYWDFLDSFLDIGTTEGLARLEAYFLEKTEQQADKSETVWNFAHLHQYFDSMAGEQQQQLRKDKNEAAGATSPSAGVMTPYTCVEKSLQVFAKRITKTLINKIGNMVSINDTLLCELKRLKSLIVSFKDDARFISVDFSKVHSRIAHLVASYVTHSQEVSVAMRLQLLQMLRSLRQLLADERGREQHLGCVCASLLLMLEQAPTSAVHLPDTLKTEELCCAAWETEQCCACLWDANLSRKTSRRKRTKSLRAAAVVQSQGQLQDTSGSTGSSALHASLGVGSTSLGASRVVASASKDAWRRQQSDDEDYDSDEQVIFFDCTNVTLPYGSSSEDEENFRTPPQSLSPGISMDLEPRYELFIFGNEPTKRDLDVLNALSNVDIDKETLPHVYAWKTAMESYSCAEMNLFPSPRNVKVQKPEPWYSGTSSSHNSQPLLHPKRLLATPKLNAVVSGRRGSGPLTAPVTPRLARTPSAASIQVASETNGESVGTAVTPASPILSFAALTAATQSFQTPLNKVRGLFSQYRDQRSYNEGDTPLGNRN.

Low complexity-rich tracts occupy residues 37 to 56 (NPAS…SAAS), 150 to 164 (SSPT…SSPT), 174 to 198 (LGSN…SSSN), and 205 to 219 (QQQM…PQQP). Disordered stretches follow at residues 37–74 (NPAS…YEDP) and 141–230 (PIIS…PFRA). The stretch at 338 to 367 (RGETPLHFAAKNGHVAMVEVLVSYPECKSL) is one ANK repeat. Disordered stretches follow at residues 519–543 (AEAT…HNNN) and 961–981 (GSSS…SPGI). Residues 521–532 (ATSSPKPTKNVP) show a composition bias toward polar residues. A compositionally biased stretch (low complexity) spans 533–543 (NGTNECEHNNN).

The protein belongs to the ANKLE2 family.

It is found in the endoplasmic reticulum. The protein localises to the nucleus envelope. Its subcellular location is the cytoplasm. Its function is as follows. Involved in brain development probably by regulating asymmetric division of neuroblasts. Regulates neuroblast asymmetric cell division by controlling asymmetric protein localization of Mira, Baz, Par-6 and aPKC, and spindle alignment. Also, regulates the localization of kinase Ball during mitosis, specifically maintaining Ball in the nucleus during interphase. Required for proper ER and nuclear envelope morphology in neuroblasts. In Drosophila melanogaster (Fruit fly), this protein is Ankyrin repeat and LEM domain-containing protein 2 homolog.